The primary structure comprises 345 residues: Anthranilate phosphoribosyltransferase (345 aa).

Residues Gly84, 87–88, Thr92, 94–97, 112–120, and Ser124 contribute to the 5-phospho-alpha-D-ribose 1-diphosphate site; these read GD, NIST, and KHGGRSVSS. Residue Gly84 coordinates anthranilate. Residue Ser96 coordinates Mg(2+). Position 170 (Arg170) interacts with anthranilate. Mg(2+)-binding residues include Asp229 and Glu230.

It belongs to the anthranilate phosphoribosyltransferase family. In terms of assembly, homodimer. Requires Mg(2+) as cofactor.

The enzyme catalyses N-(5-phospho-beta-D-ribosyl)anthranilate + diphosphate = 5-phospho-alpha-D-ribose 1-diphosphate + anthranilate. The protein operates within amino-acid biosynthesis; L-tryptophan biosynthesis; L-tryptophan from chorismate: step 2/5. Functionally, catalyzes the transfer of the phosphoribosyl group of 5-phosphorylribose-1-pyrophosphate (PRPP) to anthranilate to yield N-(5'-phosphoribosyl)-anthranilate (PRA). This Leptothrix cholodnii (strain ATCC 51168 / LMG 8142 / SP-6) (Leptothrix discophora (strain SP-6)) protein is Anthranilate phosphoribosyltransferase.